Consider the following 429-residue polypeptide: Ribosomal RNA small subunit methyltransferase B (429 aa).

Residues 254–260 (CAAPGGK), aspartate 277, aspartate 303, and aspartate 322 each bind S-adenosyl-L-methionine. The Nucleophile role is filled by cysteine 375.

This sequence belongs to the class I-like SAM-binding methyltransferase superfamily. RsmB/NOP family.

Its subcellular location is the cytoplasm. It carries out the reaction cytidine(967) in 16S rRNA + S-adenosyl-L-methionine = 5-methylcytidine(967) in 16S rRNA + S-adenosyl-L-homocysteine + H(+). Functionally, specifically methylates the cytosine at position 967 (m5C967) of 16S rRNA. The sequence is that of Ribosomal RNA small subunit methyltransferase B from Salmonella arizonae (strain ATCC BAA-731 / CDC346-86 / RSK2980).